We begin with the raw amino-acid sequence, 325 residues long: MPHLHESELFHAIKNPAFRRIGLMGRARTRSVTQSIGQIAQIINDMNLTLIMDVQTANLPTLNLTEIERVKIVKRSLIGEICDLVIVVGGDGSILHAAEALARYRVPVLGVNRGRLGFLADVKPDEAAFKLRQVLMGNYQLDHRFLLTMEIREGRKIIHEDMALNDVVLHAGKSVHMIDFQMKIDGHDVYRQHSDGLIVATPTGSTAYALSGGGPIIHPSMDAICLVPMHPHTLSSRPIVVSGTSEICIRIHEDNRTQPMVSADGKPSTPLDQEQRLYIRKHPDKLTLLHPPGFDFYEACRTKLHWNVHAEEFSLDVDDDIMDDE.

Catalysis depends on Asp91, which acts as the Proton acceptor. Residues 91–92, His96, 165–166, His176, His193, Asp195, and 206–211 contribute to the NAD(+) site; these read DG, ND, and TAYALS.

Belongs to the NAD kinase family. A divalent metal cation is required as a cofactor.

It localises to the cytoplasm. It catalyses the reaction NAD(+) + ATP = ADP + NADP(+) + H(+). In terms of biological role, involved in the regulation of the intracellular balance of NAD and NADP, and is a key enzyme in the biosynthesis of NADP. Catalyzes specifically the phosphorylation on 2'-hydroxyl of the adenosine moiety of NAD to yield NADP. The polypeptide is NAD kinase (Psychrobacter arcticus (strain DSM 17307 / VKM B-2377 / 273-4)).